The sequence spans 179 residues: Large ribosomal subunit protein uL6 (179 aa).

It belongs to the universal ribosomal protein uL6 family. In terms of assembly, part of the 50S ribosomal subunit.

This protein binds to the 23S rRNA, and is important in its secondary structure. It is located near the subunit interface in the base of the L7/L12 stalk, and near the tRNA binding site of the peptidyltransferase center. The protein is Large ribosomal subunit protein uL6 of Legionella pneumophila (strain Paris).